Here is a 211-residue protein sequence, read N- to C-terminus: Redox-sensing transcriptional repressor Rex (211 aa).

The segment at residues lysine 17 to phenylalanine 56 is a DNA-binding region (H-T-H motif). Glycine 91–glycine 96 serves as a coordination point for NAD(+).

This sequence belongs to the transcriptional regulatory Rex family. Homodimer.

It is found in the cytoplasm. Its function is as follows. Modulates transcription in response to changes in cellular NADH/NAD(+) redox state. The sequence is that of Redox-sensing transcriptional repressor Rex from Clostridium tetani (strain Massachusetts / E88).